We begin with the raw amino-acid sequence, 1431 residues long: MDRRNDYGYRVPLFQGPLPPPGSLGLPFPPDIQTETTEEDSVLLMHTLLAATKDSLAMDPPVVNRPKKSKTKKAPIKTITKAAPAAPPVPAANEIATNKPKITWQALNLPVITQISQALPTTEVTNTQASSVTAQPKKANKMKRVTAKAAQGSQSPTGHEGGTIQLKSPLQVLKLPVISQNIHAPIANESASSQALITSIKPKKASKAKKAANKAIASATEVSLAATATHTATTQGQITNETASIHTTAASIRTKKASKARKTIAKVINTDTEHIEALNVTDAATRQIEASVVAIRPKKSKGKKAASRGPNSVSEISEAPLATQIVTNQALAATLRVKRGSRARKAATKARATESQTPNADQGAQAKIASAQTNVSALETQVAAAVQALADDYLAQLSLEPTTRTRGKRNRKSKHLNGDERSGSNYRRIPWGRRPAPPRDVAILQERANKLVKYLLVKDQTKIPIKRSDMLRDVIQEYDEYFPEIIERASYTLEKMFRVNLKEIDKQSSLYILISTQESSAGILGTTKDTPKLGLLMVILSVIFMNGNKASEAVIWEVLRKLGLRPGVRHSLFGEVRKLITDEFVKQKYLEYKRVPNSRPPEYEFFWGLRSYHETSKMKVLKFACRVQKKDPKDWAVQYREAVEMEVQAAAVAVAEAEARAEARAQMGIGEEAVAGPWNWDDMDIDCLTREELGDDAQAWSRFSFEIEARAQENADASTNVNFSRGASTRAGFSDGASISFNGAPSSSGGFSGGPGITFGVAPSTSASFSNTASISFGGTLSTSSSFSSAASISFGCAHSTSTSFSSEASISFGGMPCTSASFSGGVSSSFSGPLSTSATFSGGASSGFGGTLSTTAGFSGVLSTSTSFGSAPTTSTVFSSALSTSTGFGGILSTSVCFGGSPSSSGSFGGTLSTSICFGGSPCTSTGFGGTLSTSVSFGGSSSTSANFGGTLSTSICFDGSPSTGAGFGGALNTSASFGSVLNTSTGFGGAMSTSADFGGTLSTSVCFGGSPGTSVSFGSALNTNAGYGGAVSTNTDFGGTLSTSVCFGGSPSTSAGFGGALNTNASFGCAVSTSASFSGAVSTSACFSGAPITNPGFGGAFSTSAGFGGALSTAADFGGTPSNSIGFGAAPSTSVSFGGAHGTSLCFGGAPSTSLCFGSASNTNLCFGGPPSTSACFSGATSPSFCDGPSTSTGFSFGNGLSTNAGFGGGLNTSAGFGGGLGTSAGFSGGLSTSSGFDGGLGTSAGFGGGPGTSTGFGGGLGTSAGFSGGLGTSAGFGGGLVTSDGFGGGLGTNASFGSTLGTSAGFSGGLSTSDGFGSRPNASFDRGLSTIIGFGSGSNTSTGFTGEPSTSTGFSSGPSSIVGFSGGPSTGVGFCSGPSTSGFSGGPSTGAGFGGGPNTGAGFGGGPSTSAGFGSGAASLGACGFSYG.

Disordered stretches follow at residues 1-24, 341-365, and 401-433; these read MDRRNDYGYRVPLFQGPLPPPGSL, SRARKAATKARATESQTPNADQGAQ, and PTTRTRGKRNRKSKHLNGDERSGSNYRRIPWGR. Over residues 405 to 415 the composition is skewed to basic residues; sequence TRGKRNRKSKH. Residues 444-642 enclose the MAGE domain; the sequence is LQERANKLVK…KDWAVQYREA (199 aa). 2 consecutive repeat copies span residues 751-760 and 769-778. The 62 X 10 AA approximate tandem repeats stretch occupies residues 751–1430; sequence FSGGPGITFG…ASLGACGFSY (680 aa). The 3; approximate repeat unit spans residues 779–786; it reads GTLSTSSS. 2 consecutive repeat copies span residues 787-796 and 805-814. One copy of the 6; approximate repeat lies at 823 to 833; it reads FSGGVSSSFSG. Repeat 7 spans residues 841 to 850; sequence FSGGASSGFG. The 8; approximate repeat unit spans residues 859-870; that stretch reads FSGVLSTSTSFG. Residues 879–890 form a 9; approximate repeat; it reads FSSALSTSTGFG. 5 repeat units span residues 901-910, 911-920, 921-930, 931-940, and 941-950. A 15; approximate repeat occupies 951–960; that stretch reads GTLSTSICFD. 6 tandem repeats follow at residues 961-970, 971-980, 981-990, 991-1000, 1001-1010, and 1011-1020. The 22; approximate repeat unit spans residues 1021-1030; that stretch reads SALNTNAGYG. A run of 4 repeats spans residues 1031–1040, 1041–1050, 1051–1060, and 1061–1070. One copy of the 27; approximate repeat lies at 1071-1080; sequence CAVSTSASFS. One copy of the 28; approximate repeat lies at 1081 to 1090; the sequence is GAVSTSACFS. A run of 8 repeats spans residues 1091–1100, 1101–1110, 1111–1120, 1121–1130, 1131–1140, 1141–1150, 1151–1160, and 1161–1170. The stretch at 1171 to 1180 is one 37; approximate repeat; the sequence is GPPSTSACFS. The 38; approximate repeat unit spans residues 1181–1190; the sequence is GATSPSFCDG. Repeat copies occupy residues 1191–1200, 1201–1210, and 1211–1220. Residues 1221-1230 form a 42; approximate repeat; it reads GGLGTSAGFS. Residues 1231–1240 form a 43; approximate repeat; the sequence is GGLSTSSGFD. 2 consecutive repeat copies span residues 1241–1250 and 1251–1260. The stretch at 1261–1270 is one 46; approximate repeat; the sequence is GGLGTSAGFS. 3 consecutive repeat copies span residues 1271–1280, 1281–1290, and 1291–1300. One copy of the 50; approximate repeat lies at 1301–1310; that stretch reads STLGTSAGFS. Repeat unit 51 spans residues 1311-1320; sequence GGLSTSDGFG. The stretch at 1321–1330 is one 52; approximate repeat; that stretch reads SRPNASFDRG. One copy of the 53; approximate repeat lies at 1331–1340; the sequence is LSTIIGFGSG. A 54; approximate repeat occupies 1341–1350; sequence SNTSTGFTGE. Positions 1342–1363 are enriched in low complexity; that stretch reads NTSTGFTGEPSTSTGFSSGPSS. Positions 1342-1365 are disordered; that stretch reads NTSTGFTGEPSTSTGFSSGPSSIV. One copy of the 55; approximate repeat lies at 1351 to 1360; sequence PSTSTGFSSG. The stretch at 1361–1370 is one 56; approximate repeat; it reads PSSIVGFSGG. One copy of the 57; approximate repeat lies at 1371–1380; it reads PSTGVGFCSG. The 58; approximate repeat unit spans residues 1381 to 1390; that stretch reads PSTSGFSGGP. One copy of the 59; approximate repeat lies at 1391–1400; the sequence is STGAGFGGGP. The stretch at 1401-1410 is one 60; approximate repeat; that stretch reads NTGAGFGGGP. A 61; approximate repeat occupies 1411–1420; sequence STSAGFGSGA. A 62; approximate repeat occupies 1421–1430; it reads ASLGACGFSY.

In terms of assembly, directly binds bystin, and indirectly tastin. As to expression, strong expression at implantation sites. Found in the placenta from the sixth week of pregnancy. Was localized in the cytoplasm of the syncytiotrophoblast in the chorionic villi and in endometrial decidual cells at the uteroplacental interface. After week 10, the level decreased and then disappeared from placental villi. Also found in macrophages.

Functionally, could be involved with bystin and tastin in a cell adhesion molecule complex that mediates an initial attachment of the blastocyst to uterine epithelial cells at the time of the embryo implantation. Directly responsible for homophilic cell adhesion. This Homo sapiens (Human) protein is Trophinin (TRO).